The primary structure comprises 173 residues: Lipid A deacylase PagL (173 aa).

The first 23 residues, 1–23, serve as a signal peptide directing secretion; that stretch reads MKKLLPLAVLAALSSVHVASAQA. Topologically, residues 25–28 are periplasmic; that stretch reads DVSA. Residues 29–32 traverse the membrane as a beta stranded segment; it reads AVGA. A topological domain (periplasmic) is located at residue threonine 33. The chain crosses the membrane as a beta stranded span at residues 34–49; that stretch reads GQSGMTYRLGLSWDWD. Over 50–56 the chain is Extracellular; the sequence is KSWWQTS. The chain crosses the membrane as a beta stranded span at residues 57–71; that stretch reads TGRLTGYWDAGYTYW. At 72–73 the chain is on the periplasmic side; the sequence is EG. A beta stranded transmembrane segment spans residues 74-89; the sequence is GDEGAGKHSLSFAPVF. A topological domain (extracellular) is located at residue valine 90. Residues 91-93 form a beta stranded membrane-spanning segment; that stretch reads YEF. Topologically, residues 94–95 are periplasmic; sequence AG. Residues 96 to 98 traverse the membrane as a beta stranded segment; the sequence is DSI. Topologically, residues 99 to 100 are extracellular; it reads KP. A beta stranded membrane pass occupies residues 101–115; that stretch reads FIEAGIGVAAFSGTR. Residues 116–117 are Periplasmic-facing; the sequence is VG. Residues 118–128 traverse the membrane as a beta stranded segment; that stretch reads DQNLGSSLNFE. The Extracellular segment spans residues 129 to 138; sequence DRIGAGLKFA. Residues 139 to 148 traverse the membrane as a beta stranded segment; that stretch reads NGQSVGVRAI. Active-site charge relay system residues include histidine 149, serine 151, and glutamate 163. The Periplasmic segment spans residues 149–173; sequence HYSNAGLKQPNDGIESYSLFYKIPI.

This sequence belongs to the PagL family. As to quaternary structure, homodimer.

It is found in the cell outer membrane. The enzyme catalyses a 3-(acyloxy)acyl derivative of bacterial toxin + H2O = a 3-hydroxyacyl derivative of bacterial toxin + a fatty acid + H(+). Its activity is regulated as follows. Decreased activity at low temperatures (15 or 21 degrees Celsius). In terms of biological role, has lipid A 3-O-deacylase activity. Hydrolyzes the ester bond at the 3 position of lipid A, a bioactive component of lipopolysaccharide (LPS), thereby releasing the primary fatty acyl moiety. Lacks fatty acyl chain-length specificity as removes both 3-OH C10 and 3-OH C14 fatty acids from lipid A. In Pseudomonas aeruginosa (strain ATCC 15692 / DSM 22644 / CIP 104116 / JCM 14847 / LMG 12228 / 1C / PRS 101 / PAO1), this protein is Lipid A deacylase PagL.